Reading from the N-terminus, the 285-residue chain is MSRNLSMRAKVFLKPLVLFQIIDAYDRRPKGDNQVMGTLLGRNKEDHIEITNCFTVPHKEHSENKRIDLDMTYASEVLELNMFAYPNERVLGWFCTGKSVSRSASLIHDYYVRECGERQPLHLLVDASLKNQRLSTRLYCAVEMGVPGGTKGLMFSLVPLEISSENSDLLAMRCIEKQSQQQASKQMERFAPELVQVVDATRDIQQRLDLLLRYINDVLARKKKPDNVVGRSLQAALTAVPLLDSEKFRLMFNTNLRDMLMAITLSTMIKTQLEISEKLSCMQDQ.

Positions 11–145 constitute an MPN domain; sequence VFLKPLVLFQ…TRLYCAVEMG (135 aa).

The protein belongs to the eIF-3 subunit F family. Component of the eukaryotic translation initiation factor 3 (eIF-3) complex. The eIF-3 complex interacts with pix.

Its subcellular location is the cytoplasm. In terms of biological role, component of the eukaryotic translation initiation factor 3 (eIF-3) complex, which is involved in protein synthesis of a specialized repertoire of mRNAs and, together with other initiation factors, stimulates binding of mRNA and methionyl-tRNAi to the 40S ribosome. The eIF-3 complex specifically targets and initiates translation of a subset of mRNAs involved in cell proliferation. The sequence is that of Eukaryotic translation initiation factor 3 subunit F-2 from Drosophila simulans (Fruit fly).